A 1096-amino-acid chain; its full sequence is DNA-directed RNA polymerase subunit beta (1096 aa).

Residues 1069–1096 are disordered; the sequence is DLMQDVNPRRSTPSRPTYESLGSDYQED.

This sequence belongs to the RNA polymerase beta chain family. In cyanobacteria the RNAP catalytic core is composed of 2 alpha, 1 beta, 1 beta', 1 gamma and 1 omega subunit. When a sigma factor is associated with the core the holoenzyme is formed, which can initiate transcription.

The enzyme catalyses RNA(n) + a ribonucleoside 5'-triphosphate = RNA(n+1) + diphosphate. In terms of biological role, DNA-dependent RNA polymerase catalyzes the transcription of DNA into RNA using the four ribonucleoside triphosphates as substrates. The sequence is that of DNA-directed RNA polymerase subunit beta from Prochlorococcus marinus (strain SARG / CCMP1375 / SS120).